Consider the following 367-residue polypeptide: Phosphoribosylaminoimidazole-succinocarboxamide synthase (367 aa).

This sequence belongs to the SAICAR synthetase family.

The enzyme catalyses 5-amino-1-(5-phospho-D-ribosyl)imidazole-4-carboxylate + L-aspartate + ATP = (2S)-2-[5-amino-1-(5-phospho-beta-D-ribosyl)imidazole-4-carboxamido]succinate + ADP + phosphate + 2 H(+). The protein operates within purine metabolism; IMP biosynthesis via de novo pathway; 5-amino-1-(5-phospho-D-ribosyl)imidazole-4-carboxamide from 5-amino-1-(5-phospho-D-ribosyl)imidazole-4-carboxylate: step 1/2. In Shewanella putrefaciens (strain CN-32 / ATCC BAA-453), this protein is Phosphoribosylaminoimidazole-succinocarboxamide synthase.